We begin with the raw amino-acid sequence, 396 residues long: NADH-ubiquinone oxidoreductase 49 kDa subunit (396 aa).

It belongs to the complex I 49 kDa subunit family.

The protein resides in the mitochondrion. It catalyses the reaction a ubiquinone + NADH + 5 H(+)(in) = a ubiquinol + NAD(+) + 4 H(+)(out). Its function is as follows. Core subunit of the mitochondrial membrane respiratory chain NADH dehydrogenase (Complex I) that is believed to belong to the minimal assembly required for catalysis. Complex I functions in the transfer of electrons from NADH to the respiratory chain. The immediate electron acceptor for the enzyme is believed to be ubiquinone. Component of the iron-sulfur (IP) fragment of the enzyme. Component of the iron-sulfur (IP) fragment of the enzyme. This is NADH-ubiquinone oxidoreductase 49 kDa subunit (NAD7) from Reclinomonas americana.